The primary structure comprises 80 residues: uncharacterized protein (80 aa).

This is an uncharacterized protein from Homo sapiens (Human).